We begin with the raw amino-acid sequence, 324 residues long: Viral cathepsin (324 aa).

The N-terminal stretch at 1–16 (MNKIMLCLLVCGVVHA) is a signal peptide. The propeptide at 17–113 (ATYDLLKAPN…VILDRPPDRG (97 aa)) is activation peptide. 3 disulfides stabilise this stretch: C134-C175, C168-C208, and C263-C311. C137 is an active-site residue. N159 carries N-linked (GlcNAc...) asparagine; by host glycosylation. Active-site residues include H270 and N290.

The protein belongs to the peptidase C1 family. Post-translationally, synthesized as an inactive proenzyme and activated by proteolytic removal of the inhibitory propeptide.

It catalyses the reaction Endopeptidase of broad specificity, hydrolyzing substrates of both cathepsin L and cathepsin B.. Functionally, cysteine protease that plays an essential role in host liquefaction to facilitate horizontal transmission of the virus. May participate in the degradation of foreign protein expressed by the baculovirus system. In Orgyia pseudotsugata (Douglas-fir tussock moth), this protein is Viral cathepsin (VCATH).